Here is a 1898-residue protein sequence, read N- to C-terminus: Receptor-type tyrosine-protein phosphatase F (1898 aa).

The signal sequence occupies residues 1–29; sequence MAPEPAPGRRMVPLVPALVMLGLMAGAHG. Topologically, residues 30–1254 are extracellular; the sequence is DSKPVFVKVP…QQQEEPEMLW (1225 aa). 3 consecutive Ig-like C2-type domains span residues 33–123, 135–224, and 232–314; these read PVFV…AKLS, PTID…ANLY, and PRFS…AQVT. Cysteine 54 and cysteine 107 are joined by a disulfide. Heparin is bound at residue 68-77; the sequence is KKGKKVSSQR. Asparagine 117 is a glycosylation site (N-linked (GlcNAc...) asparagine). Cysteine 156 and cysteine 207 form a disulfide bridge. Residues asparagine 250 and asparagine 295 are each glycosylated (N-linked (GlcNAc...) asparagine). Cysteines 253 and 298 form a disulfide. 8 Fibronectin type-III domains span residues 321–411, 416–510, 514–604, 609–706, 711–810, 811–904, 909–1001, and 1005–1089; these read PPID…TGEQ, PPRR…TQQG, QPAD…TAQS, PPQK…TDED, PPRK…TTGA, VPGR…TPED, FPQN…TMPV, and FAKN…TAPD. The interval 693 to 712 is disordered; that stretch reads GPESSPVLVRTDEDVPSGPP. Asparagine 721 is a glycosylation site (N-linked (GlcNAc...) asparagine). Residues asparagine 941, asparagine 957, and asparagine 960 are each glycosylated (N-linked (GlcNAc...) asparagine). A helical membrane pass occupies residues 1255-1275; the sequence is VTGPVLAVILIILIVIAILLF. Over 1276 to 1898 the chain is Cytoplasmic; the sequence is KRKRTHSPSS…YLGSFDHYAT (623 aa). Serine 1296 carries the post-translational modification Phosphoserine. Tyrosine-protein phosphatase domains are found at residues 1343 to 1598 and 1630 to 1889; these read FSQE…LLEA and MELE…ALEY. Substrate contacts are provided by residues aspartate 1507, 1539 to 1545, and glutamine 1583; that span reads CSAGVGR. The active-site Phosphocysteine intermediate is cysteine 1539. The Phosphocysteine intermediate role is filled by cysteine 1830.

This sequence belongs to the protein-tyrosine phosphatase family. Receptor class 2A subfamily. In terms of assembly, interacts with GRIP1. Interacts with PPFIA1, PPFIA2 and PPFIA3. Interacts with PTPRF. In terms of tissue distribution, expressed in the cell of the T lineage but not in cells of any other hemopoietic lineage.

The protein resides in the membrane. It catalyses the reaction O-phospho-L-tyrosyl-[protein] + H2O = L-tyrosyl-[protein] + phosphate. In terms of biological role, possible cell adhesion receptor. It possesses an intrinsic protein tyrosine phosphatase activity (PTPase) and dephosphorylates EPHA2 regulating its activity. In Mus musculus (Mouse), this protein is Receptor-type tyrosine-protein phosphatase F (Ptprf).